We begin with the raw amino-acid sequence, 622 residues long: Signal recognition particle subunit SRP68 (622 aa).

Residues 576 to 622 are disordered; that stretch reads RDATPKKAAKGSSAAAASSKTSNQEEEEQQGLTGMLSGWKKSFWGNK. Residues 585 to 595 are compositionally biased toward low complexity; sequence KGSSAAAASSK.

The protein belongs to the SRP68 family. In terms of assembly, heterodimer with srpa-72. Srpa-68/srpa-72 heterodimer formation is stabilized by the presence of 7SL RNA. Component of a signal recognition particle (SRP) complex that consists of a 7SL RNA molecule of 300 nucleotides and six protein subunits: srpa-72, srpa-68, SRP54, F37F2.2/SRP19, F25G6.8/SRP14 and ZK512.4/SRP9. Within the SRP complex, interacts (via C-terminus) with srpa-72 (via N-terminus).

It is found in the cytoplasm. Its subcellular location is the nucleus. The protein localises to the nucleolus. It localises to the endoplasmic reticulum. Its function is as follows. Component of the signal recognition particle (SRP) complex, a ribonucleoprotein complex that mediates the cotranslational targeting of secretory and membrane proteins to the endoplasmic reticulum (ER). The SRP complex interacts with the signal sequence in nascent secretory and membrane proteins and directs them to the membrane of the ER. The SRP complex targets the ribosome-nascent chain complex to the SRP receptor (SR), which is anchored in the ER, where SR compaction and GTPase rearrangement drive cotranslational protein translocation into the ER. Binds the signal recognition particle RNA (7SL RNA), srpa-72 binds to this complex subsequently. The SRP complex possibly participates in the elongation arrest function. In Caenorhabditis elegans, this protein is Signal recognition particle subunit SRP68.